The primary structure comprises 339 residues: Cyclin-Y-like protein 1-A (339 aa).

Residues 1 to 13 (MGNTVTCCVSPDS) show a composition bias toward polar residues. Residues 1-42 (MGNTVTCCVSPDSSPKEGRDREVTESGEPYQAQGEPQDGDVQ) are disordered. A compositionally biased stretch (basic and acidic residues) spans 14 to 24 (SPKEGRDREVT). Residues 141 to 263 (DIFDEKLHPI…FLELLQFNIN (123 aa)) enclose the Cyclin N-terminal domain.

The protein belongs to the cyclin family. Cyclin Y subfamily.

The sequence is that of Cyclin-Y-like protein 1-A (ccnyl1-a) from Xenopus laevis (African clawed frog).